Reading from the N-terminus, the 397-residue chain is Enoyl-[acyl-carrier-protein] reductase [NADH] (397 aa).

NAD(+) is bound by residues 48 to 53 (GASTGY), 74 to 75 (FE), 111 to 112 (DA), and 139 to 140 (LA). Tyrosine 225 is a binding site for substrate. Tyrosine 235 serves as the catalytic Proton donor. NAD(+) is bound by residues lysine 244 and 273-275 (VVT).

This sequence belongs to the TER reductase family. As to quaternary structure, monomer.

The enzyme catalyses a 2,3-saturated acyl-[ACP] + NAD(+) = a (2E)-enoyl-[ACP] + NADH + H(+). The protein operates within lipid metabolism; fatty acid biosynthesis. Involved in the final reduction of the elongation cycle of fatty acid synthesis (FAS II). Catalyzes the reduction of a carbon-carbon double bond in an enoyl moiety that is covalently linked to an acyl carrier protein (ACP). The protein is Enoyl-[acyl-carrier-protein] reductase [NADH] of Pseudoalteromonas translucida (strain TAC 125).